The following is a 215-amino-acid chain: Probable GTP-binding protein EngB (215 aa).

The EngB-type G domain occupies glutamate 30 to leucine 204. GTP contacts are provided by residues glycine 38 to serine 45, glycine 64 to leucine 68, aspartate 82 to glycine 85, threonine 149 to aspartate 152, and leucine 182 to alanine 185. Positions 45 and 66 each coordinate Mg(2+).

It belongs to the TRAFAC class TrmE-Era-EngA-EngB-Septin-like GTPase superfamily. EngB GTPase family. Mg(2+) is required as a cofactor.

Necessary for normal cell division and for the maintenance of normal septation. The polypeptide is Probable GTP-binding protein EngB (Pseudomonas paraeruginosa (strain DSM 24068 / PA7) (Pseudomonas aeruginosa (strain PA7))).